The primary structure comprises 331 residues: Flavonol synthase 1 (331 aa).

The Fe2OG dioxygenase domain occupies 191–292 (DAIELLLKIN…RMSWPVFCSP (102 aa)). Fe cation contacts are provided by His217, Asp219, and His273. Arg283 is a binding site for 2-oxoglutarate.

The protein belongs to the iron/ascorbate-dependent oxidoreductase family. It depends on L-ascorbate as a cofactor. The cofactor is Fe(2+). As to expression, expressed in young cromes.

It catalyses the reaction a (2R,3R)-dihydroflavonol + 2-oxoglutarate + O2 = a flavonol + succinate + CO2 + H2O. It carries out the reaction (2R,3R)-dihydrokaempferol + 2-oxoglutarate + O2 = kaempferol + succinate + CO2 + H2O + H(+). The catalysed reaction is (2R,3R)-dihydroquercetin + 2-oxoglutarate + O2 = quercetin + succinate + CO2 + H2O + H(+). The enzyme catalyses (2R,3R)-dihydromyricetin + 2-oxoglutarate + O2 = myricetin + succinate + CO2 + H2O + H(+). The protein operates within flavonoid metabolism. In terms of biological role, catalyzes the formation of flavonols from dihydroflavonols. Can act on dihydrokaempferol to produce kaempferol, on dihydroquercetin to produce quercitin and on dihydromyricetin to produce myricetin. The protein is Flavonol synthase 1 of Crocosmia x crocosmiiflora (Montbretia).